Consider the following 128-residue polypeptide: NADH-ubiquinone oxidoreductase chain 3 (128 aa).

3 consecutive transmembrane segments (helical) span residues 4-24 (FIIF…VNIL), 50-70 (LAFN…DLEI), and 86-106 (YGFT…VYEI).

The protein belongs to the complex I subunit 3 family. In terms of assembly, complex I is composed of 37 different subunits.

The protein localises to the mitochondrion membrane. It carries out the reaction a ubiquinone + NADH + 5 H(+)(in) = a ubiquinol + NAD(+) + 4 H(+)(out). Its function is as follows. Core subunit of the mitochondrial membrane respiratory chain NADH dehydrogenase (Complex I) that is believed to belong to the minimal assembly required for catalysis. Complex I functions in the transfer of electrons from NADH to the respiratory chain. The immediate electron acceptor for the enzyme is believed to be ubiquinone. This chain is NADH-ubiquinone oxidoreductase chain 3 (ND3), found in Yarrowia lipolytica (strain CLIB 122 / E 150) (Yeast).